Reading from the N-terminus, the 198-residue chain is Sensory transduction protein RegX3 (198 aa).

One can recognise a Response regulatory domain in the interval 1–87 (MVTDGPAALA…ELIARIRAVL (87 aa)). Residue Asp23 is modified to 4-aspartylphosphate. The segment at residues 99-198 (DGVLESGPLR…VRGLGYKLES (100 aa)) is a DNA-binding region (ompR/PhoB-type).

Post-translationally, phosphorylated by SenX3.

In terms of biological role, member of the two-component regulatory system SenX3/RegX3. This Mycobacterium leprae (strain TN) protein is Sensory transduction protein RegX3 (rgx3).